We begin with the raw amino-acid sequence, 769 residues long: 5-methyltetrahydropteroyltriglutamate--homocysteine methyltransferase (769 aa).

5-methyltetrahydropteroyltri-L-glutamate contacts are provided by residues 18–21 and K127; that span reads RELK. L-homocysteine contacts are provided by residues 447–449 and E500; that span reads IGS. L-methionine-binding positions include 447 to 449 and E500; that span reads IGS. Residues 531 to 532 and W577 contribute to the 5-methyltetrahydropteroyltri-L-glutamate site; that span reads RC. L-homocysteine is bound at residue D615. An L-methionine-binding site is contributed by D615. A 5-methyltetrahydropteroyltri-L-glutamate-binding site is contributed by E621. Positions 657, 659, and 681 each coordinate Zn(2+). The Proton donor role is filled by H710. Residue C742 coordinates Zn(2+).

This sequence belongs to the vitamin-B12 independent methionine synthase family. It depends on Zn(2+) as a cofactor.

The enzyme catalyses 5-methyltetrahydropteroyltri-L-glutamate + L-homocysteine = tetrahydropteroyltri-L-glutamate + L-methionine. It participates in amino-acid biosynthesis; L-methionine biosynthesis via de novo pathway; L-methionine from L-homocysteine (MetE route): step 1/1. In terms of biological role, catalyzes the transfer of a methyl group from 5-methyltetrahydrofolate to homocysteine resulting in methionine formation. The protein is 5-methyltetrahydropteroyltriglutamate--homocysteine methyltransferase of Chelativorans sp. (strain BNC1).